The primary structure comprises 210 residues: Large ribosomal subunit protein uL4 (210 aa).

The interval 46–77 (QGTHKSKERGEIAGSTKKIKKQKGTGTARAGS) is disordered.

Belongs to the universal ribosomal protein uL4 family. Part of the 50S ribosomal subunit.

Functionally, one of the primary rRNA binding proteins, this protein initially binds near the 5'-end of the 23S rRNA. It is important during the early stages of 50S assembly. It makes multiple contacts with different domains of the 23S rRNA in the assembled 50S subunit and ribosome. Its function is as follows. Forms part of the polypeptide exit tunnel. The protein is Large ribosomal subunit protein uL4 of Amoebophilus asiaticus (strain 5a2).